We begin with the raw amino-acid sequence, 156 residues long: ATP synthase subunit b 2 (156 aa).

Residues Ser-6–Trp-26 form a helical membrane-spanning segment.

The protein belongs to the ATPase B chain family. In terms of assembly, F-type ATPases have 2 components, F(1) - the catalytic core - and F(0) - the membrane proton channel. F(1) has five subunits: alpha(3), beta(3), gamma(1), delta(1), epsilon(1). F(0) has three main subunits: a(1), b(2) and c(10-14). The alpha and beta chains form an alternating ring which encloses part of the gamma chain. F(1) is attached to F(0) by a central stalk formed by the gamma and epsilon chains, while a peripheral stalk is formed by the delta and b chains.

Its subcellular location is the cell inner membrane. F(1)F(0) ATP synthase produces ATP from ADP in the presence of a proton or sodium gradient. F-type ATPases consist of two structural domains, F(1) containing the extramembraneous catalytic core and F(0) containing the membrane proton channel, linked together by a central stalk and a peripheral stalk. During catalysis, ATP synthesis in the catalytic domain of F(1) is coupled via a rotary mechanism of the central stalk subunits to proton translocation. In terms of biological role, component of the F(0) channel, it forms part of the peripheral stalk, linking F(1) to F(0). The sequence is that of ATP synthase subunit b 2 from Vibrio campbellii (strain ATCC BAA-1116).